The following is an 895-amino-acid chain: Catenin alpha-3 (895 aa).

Ser56 bears the Phosphoserine mark. Residues 74–111 adopt a coiled-coil conformation; the sequence is EKIAQEATVLKDELTASLEEVRKESEALKVSAERFTDD. Phosphoserine is present on Ser160. Positions 325-379 form a coiled coil; sequence RERIIAECNAIRQALQDLLSEYMNNAGKKERSNTLNIALDNMCKKTRDLRRQLRK. A phosphoserine mark is found at Ser637 and Ser647. Thr649 is modified (phosphothreonine).

Belongs to the vinculin/alpha-catenin family. Interacts with CTNNB1. Interacts with PKP2. As to expression, predominantly expressed in heart and testis. Expressed at lower levels in brain, kidney, liver and skeletal muscle.

Its subcellular location is the cytoplasm. The protein resides in the cytoskeleton. The protein localises to the cell junction. It localises to the desmosome. May be involved in formation of stretch-resistant cell-cell adhesion complexes. The sequence is that of Catenin alpha-3 from Homo sapiens (Human).